A 489-amino-acid polypeptide reads, in one-letter code: Protein DETOXIFICATION 26 (489 aa).

Transmembrane regions (helical) follow at residues Ile42–Ile62, Leu75–Gly95, Ile125–Leu145, Leu157–Pro177, Val190–Val210, Ile217–Leu237, Ile271–Val291, Leu300–Gly320, Ile342–Phe362, Val385–Val405, Ile416–Phe436, and Gly442–Ile462.

This sequence belongs to the multi antimicrobial extrusion (MATE) (TC 2.A.66.1) family.

Its subcellular location is the membrane. This chain is Protein DETOXIFICATION 26, found in Arabidopsis thaliana (Mouse-ear cress).